Here is a 311-residue protein sequence, read N- to C-terminus: Methionyl-tRNA formyltransferase (311 aa).

Position 110–113 (110–113 (SLLP)) interacts with (6S)-5,6,7,8-tetrahydrofolate.

It belongs to the Fmt family.

The catalysed reaction is L-methionyl-tRNA(fMet) + (6R)-10-formyltetrahydrofolate = N-formyl-L-methionyl-tRNA(fMet) + (6S)-5,6,7,8-tetrahydrofolate + H(+). In terms of biological role, attaches a formyl group to the free amino group of methionyl-tRNA(fMet). The formyl group appears to play a dual role in the initiator identity of N-formylmethionyl-tRNA by promoting its recognition by IF2 and preventing the misappropriation of this tRNA by the elongation apparatus. This chain is Methionyl-tRNA formyltransferase, found in Sulfurihydrogenibium sp. (strain YO3AOP1).